The sequence spans 309 residues: Taste receptor type 2 member 64 (309 aa).

Over 1–3 (MVY) the chain is Extracellular. The helical transmembrane segment at 4–26 (FLLIILSILVVFAFVLGNFSNGF) threads the bilayer. The Cytoplasmic portion of the chain corresponds to 27–46 (VALVNVIDWVKTRKISSADQ). A helical membrane pass occupies residues 47–69 (ILTALVVSRIGLLWVILFHWYAN). Residues 70–83 (VFNSALYSSEVGAV) are Extracellular-facing. The chain crosses the membrane as a helical span at residues 84–106 (ASNISAIINHFSIWLAASLGIFY). The Cytoplasmic portion of the chain corresponds to 107–126 (LLKIANFSNLIFLHLKKRIR). A helical membrane pass occupies residues 127-149 (SVVLVILLGPLVFLICNLAVITM). The Extracellular portion of the chain corresponds to 150 to 176 (DERVWTKEYEGNVTWKIKLRNAIHLSD). N-linked (GlcNAc...) asparagine glycosylation is present at Asn-161. Residues 177 to 199 (LTVSTLANLIPFILTLICFLLLI) form a helical membrane-spanning segment. Topologically, residues 200 to 230 (CSLHKHLKKMQLHGKGSQDLSTKVHIKALQT) are cytoplasmic. The chain crosses the membrane as a helical span at residues 231 to 253 (VISFLMLYAIYFLYLITLTWNLW). Topologically, residues 254–258 (TQQNK) are extracellular. The helical transmembrane segment at 259–281 (LVFLLCQTLGIMYPSFHSFFLIM) threads the bilayer. Topologically, residues 282–309 (GSRKLKQTFLSVLCQVTCLVKGQQPSTP) are cytoplasmic.

It belongs to the G-protein coupled receptor T2R family.

The protein resides in the membrane. In terms of biological role, receptor that may play a role in the perception of bitterness and is gustducin-linked. May play a role in sensing the chemical composition of the gastrointestinal content. The activity of this receptor may stimulate alpha gustducin, mediate PLC-beta-2 activation and lead to the gating of TRPM5. This Pan paniscus (Pygmy chimpanzee) protein is Taste receptor type 2 member 64 (TAS2R64).